The sequence spans 223 residues: MKNLEEFERNLGYKFKKSELLEEALTHKSTKQALNNERLEFLGDAVMDLLVAEYLFKKFSKIAEGDMSKLRAALVNEKSFANMARRLKMGEFLRLSQAEENNGGREKDSILSDAFEAVMGAIYLEAGLLKVREISISLLELCYPQIDFAHLEKDYKTALQEVTQATLGVIPTYELIGSFGPDHKKEFEIALLLNGKEISRAVGSSKKQAQQLAAKIALEKIKK.

Residues Leu-4 to Gly-127 form the RNase III domain. Glu-40 contributes to the Mg(2+) binding site. Residue Asp-44 is part of the active site. 2 residues coordinate Mg(2+): Asp-113 and Glu-116. Residue Glu-116 is part of the active site. One can recognise a DRBM domain in the interval Asp-154–Lys-223.

It belongs to the ribonuclease III family. In terms of assembly, homodimer. Requires Mg(2+) as cofactor.

The protein localises to the cytoplasm. The catalysed reaction is Endonucleolytic cleavage to 5'-phosphomonoester.. Its function is as follows. Digests double-stranded RNA. Involved in the processing of primary rRNA transcript to yield the immediate precursors to the large and small rRNAs (23S and 16S). Processes some mRNAs, and tRNAs when they are encoded in the rRNA operon. Processes pre-crRNA and tracrRNA of type II CRISPR loci if present in the organism. The polypeptide is Ribonuclease 3 (Campylobacter concisus (strain 13826)).